Reading from the N-terminus, the 509-residue chain is Zinc finger protein Aiolos (509 aa).

Positions 1-85 (MEDIKPNVEL…PMGNAEEPEI (85 aa)) are disordered. Positions 10–20 (LKSTQEQSVPT) are enriched in polar residues. Threonine 20 carries the post-translational modification Phosphothreonine. Residues 56–72 (DSMKVKDEYSERDENVL) show a composition bias toward basic and acidic residues. Residues lysine 61, lysine 73, and lysine 100 each participate in a glycyl lysine isopeptide (Lys-Gly) (interchain with G-Cter in SUMO2) cross-link. C2H2-type zinc fingers lie at residues 118–140 (MNCDVCGLSCISFNVLMVHKRSH), 146–168 (FQCNQCGASFTQKGNLLRHIKLH), and 174–196 (FKCHLCNYACQRRDALTGHLRTH). The segment at 202 to 224 (YKCEFCGRSYKQRSSLEEHKERC) adopts a C2H2-type 4; atypical zinc-finger fold. Lysine 245 is covalently cross-linked (Glycyl lysine isopeptide (Lys-Gly) (interchain with G-Cter in SUMO2)). A Phosphothreonine modification is found at threonine 326. Positions 365–421 (HLPEKSLPSERGLSPTNSGHDSTDTDSNHEERQNHIYQQNPMVPPRARNGMPLLKEG) are disordered. Phosphoserine is present on serine 378. Basic and acidic residues predominate over residues 385 to 398 (DSTDTDSNHEERQN). A C2H2-type 5 zinc finger spans residues 452-474 (YRCDHCRVLFLDYVMFTIHMGCH). The mediates homodimerization and heterodimerization stretch occupies residues 452 to 504 (YRCDHCRVLFLDYVMFTIHMGCHGFRDPFECNMCGYRSHDRYEFSSHIARGEH). A C2H2-type 6; atypical zinc finger spans residues 480–504 (FECNMCGYRSHDRYEFSSHIARGEH).

The protein belongs to the Ikaros C2H2-type zinc-finger protein family. As to quaternary structure, homodimer. Heterodimer with other IKAROS family members. Interacts with IKZF4 and IKZF5. Interacts with IKZF1. Interacts with HRAS. Interacts with FOXP3; this interaction may be required for silencing target genes and regulating the suppressive activity of FOXP3-positive regulatory T-cells (Treg). Interacts with BCL21L; this interaction blocks the anti-apoptotic role of BCL21L. Associates with histone deacetylase complexes containing HDAC1, MTA2 and SIN3A.

Its subcellular location is the nucleus. The protein resides in the cytoplasm. Functionally, transcription factor that plays an important role in the regulation of lymphocyte differentiation. Plays an essential role in regulation of B-cell differentiation, proliferation and maturation to an effector state. Involved in regulating BCL2 expression and controlling apoptosis in T-cells in an IL2-dependent manner. The protein is Zinc finger protein Aiolos (IKZF3) of Bos taurus (Bovine).